Here is a 1049-residue protein sequence, read N- to C-terminus: Vacuolar membrane protease (1049 aa).

The Cytoplasmic portion of the chain corresponds to 1–11; that stretch reads MKCYNPSAFVP. The helical transmembrane segment at 12–32 threads the bilayer; sequence MAVTLVTVIIYLGVFIPLLII. The Vacuolar portion of the chain corresponds to 33 to 438; the sequence is QETVPSAPDD…TVFAVFKLRT (406 aa). N50 carries an N-linked (GlcNAc...) asparagine glycan. The disordered stretch occupies residues 114–135; the sequence is DAEAPESVPSPSNSNDGSAERY. Residue N157 is glycosylated (N-linked (GlcNAc...) asparagine). Zn(2+)-binding residues include H221 and D233. E267 (proton acceptor) is an active-site residue. Zn(2+) is bound by residues E268, E293, and H365. The helical transmembrane segment at 439 to 459 threads the bilayer; the sequence is LFAWSLTLLIAAPLMLFAVSY. Residues 460 to 495 lie on the Cytoplasmic side of the membrane; the sequence is LLNRQDKFYFFAGSIKAKGPEDEPISLGGWRGAFRY. A helical membrane pass occupies residues 496–516; the sequence is PITLIITCAITFGCASLINKI. Topologically, residues 517-526 are vacuolar; that stretch reads NPMIVYSSPY. The helical transmembrane segment at 527-547 threads the bilayer; sequence SVWSMSASLFFSIFWFIMAGC. The Cytoplasmic segment spans residues 548-557; that stretch reads NFVRPSALQR. A helical transmembrane segment spans residues 558–578; sequence GYAFMWLFVFGWIILVAATVY. Residues 579 to 585 are Vacuolar-facing; sequence EDRFKIS. Residues 586–606 traverse the membrane as a helical segment; it reads GGYLFVFYEAAIFLATLIAIG. The Cytoplasmic portion of the chain corresponds to 607–740; sequence EQFALPKKST…LPIWTWLVQY (134 aa). Positions 621–686 are disordered; that stretch reads SQLDHDGNQD…IGGGAPTQRS (66 aa). Residues 622–633 are compositionally biased toward basic and acidic residues; sequence QLDHDGNQDSHH. Positions 655–664 are enriched in acidic residues; it reads GQEEDPEDNV. A helical membrane pass occupies residues 741–761; it reads LLVGPFILIVVGQVGLFLVAA. Residues 762–773 are Vacuolar-facing; the sequence is LHQTGTDGSPLL. The helical transmembrane segment at 774-794 threads the bilayer; the sequence is LPYLVVAVFSILLLLPVTPFI. At 795 to 801 the chain is on the cytoplasmic side; the sequence is HRLTHHM. A helical transmembrane segment spans residues 802 to 822; sequence PTFFFLVFIGTLIYNLVAFPF. At 823-1049 the chain is on the vacuolar side; that stretch reads SPNNRYKAYF…LVEGSKRFVV (227 aa). N914 carries an N-linked (GlcNAc...) asparagine glycan.

This sequence belongs to the peptidase M28 family. Zn(2+) serves as cofactor.

Its subcellular location is the vacuole membrane. Functionally, may be involved in vacuolar sorting and osmoregulation. The chain is Vacuolar membrane protease from Botryotinia fuckeliana (strain B05.10) (Noble rot fungus).